The sequence spans 93 residues: Small ribosomal subunit protein uS19 (93 aa).

It belongs to the universal ribosomal protein uS19 family.

In terms of biological role, protein S19 forms a complex with S13 that binds strongly to the 16S ribosomal RNA. This is Small ribosomal subunit protein uS19 from Ligilactobacillus salivarius (strain UCC118) (Lactobacillus salivarius).